The primary structure comprises 501 residues: tRNA (guanine(37)-N(1))-methyltransferase (501 aa).

Residues histidine 282, 320–321 (DL), 348–349 (DG), and asparagine 380 each bind S-adenosyl-L-methionine. Residues 474-501 (LQNDQEPPLKRQKTGDPFSGEPQIASDS) form a disordered region.

Belongs to the class I-like SAM-binding methyltransferase superfamily. TRM5/TYW2 family. Monomer.

Its subcellular location is the mitochondrion matrix. The protein localises to the nucleus. It localises to the cytoplasm. The enzyme catalyses guanosine(37) in tRNA + S-adenosyl-L-methionine = N(1)-methylguanosine(37) in tRNA + S-adenosyl-L-homocysteine + H(+). In terms of biological role, involved in mitochondrial tRNA methylation. Specifically methylates the N1 position of guanosine-37 in various tRNAs. Methylation is not dependent on the nature of the nucleoside 5' of the target nucleoside. This is the first step in the biosynthesis of wybutosine (yW), a modified base adjacent to the anticodon of tRNAs and required for accurate decoding. This is tRNA (guanine(37)-N(1))-methyltransferase (Trmt5) from Mus musculus (Mouse).